A 240-amino-acid chain; its full sequence is Protein OPG176 (240 aa).

It belongs to the orthopoxvirus OPG176 family. Tetramer. Interacts with host MYD88, TRF4, TICAM2 and MAL.

Functionally, BCL2-like protein which disrupts the host immune response by inhibiting the TLR4 signaling pathway leading to NF-kappa-B activation. Acts close to the plasma membrane and targets several host TIR-domain containing adapter proteins including MYD88, TIRAP, TRIF and TICAM2. In turn, blocks the host NF-kappa-B and TRIF-mediated IRF3 activation. This Bos taurus (Bovine) protein is Protein OPG176 (OPG176).